The sequence spans 159 residues: Lipoprotein signal peptidase (159 aa).

The next 2 membrane-spanning stretches (helical) occupy residues S64–V84 and P89–I109. Catalysis depends on residues D119 and D135. The chain crosses the membrane as a helical span at residues I130 to W150.

It belongs to the peptidase A8 family.

It is found in the cell inner membrane. The enzyme catalyses Release of signal peptides from bacterial membrane prolipoproteins. Hydrolyzes -Xaa-Yaa-Zaa-|-(S,diacylglyceryl)Cys-, in which Xaa is hydrophobic (preferably Leu), and Yaa (Ala or Ser) and Zaa (Gly or Ala) have small, neutral side chains.. It functions in the pathway protein modification; lipoprotein biosynthesis (signal peptide cleavage). This protein specifically catalyzes the removal of signal peptides from prolipoproteins. In Parasynechococcus marenigrum (strain WH8102), this protein is Lipoprotein signal peptidase.